The following is a 452-amino-acid chain: Phosphoglucosamine mutase (452 aa).

The Phosphoserine intermediate role is filled by Ser97. Mg(2+) contacts are provided by Ser97, Asp236, Asp238, and Asp240. At Ser97 the chain carries Phosphoserine.

This sequence belongs to the phosphohexose mutase family. Mg(2+) is required as a cofactor. Post-translationally, activated by phosphorylation.

It carries out the reaction alpha-D-glucosamine 1-phosphate = D-glucosamine 6-phosphate. Functionally, catalyzes the conversion of glucosamine-6-phosphate to glucosamine-1-phosphate. The sequence is that of Phosphoglucosamine mutase from Prochlorococcus marinus subsp. pastoris (strain CCMP1986 / NIES-2087 / MED4).